A 475-amino-acid polypeptide reads, in one-letter code: Ornithine aminotransferase, mitochondrial (475 aa).

A mitochondrion-targeting transit peptide spans 1-16; that stretch reads MAATTRRLLYYVSKRF. The segment at 23–43 is disordered; it reads RSYGGLPQSNSKSPPSSSQRL. Over residues 29-41 the composition is skewed to low complexity; that stretch reads PQSNSKSPPSSSQ. Pyridoxal 5'-phosphate is bound by residues 142–143 and phenylalanine 177; that span reads GA. Arginine 180 is an L-ornithine binding site. Residue 265-268 participates in pyridoxal 5'-phosphate binding; the sequence is DEVQ. Lysine 294 carries the post-translational modification N6-(pyridoxal phosphate)lysine. Position 323 (serine 323) interacts with L-ornithine. Threonine 324 contributes to the pyridoxal 5'-phosphate binding site.

This sequence belongs to the class-III pyridoxal-phosphate-dependent aminotransferase family. As to quaternary structure, homotetramer. Pyridoxal 5'-phosphate serves as cofactor.

It is found in the mitochondrion matrix. It carries out the reaction a 2-oxocarboxylate + L-ornithine = L-glutamate 5-semialdehyde + an L-alpha-amino acid. The protein operates within amino-acid biosynthesis; L-proline biosynthesis; L-glutamate 5-semialdehyde from L-ornithine: step 1/1. Functionally, mediates degradation of arginine for nitrogen recycling. Plays a role in non-host disease resistance by regulating pyrroline-5-carboxylate metabolism-induced hypersensitive response. In Arabidopsis thaliana (Mouse-ear cress), this protein is Ornithine aminotransferase, mitochondrial.